Here is a 332-residue protein sequence, read N- to C-terminus: L-lactate dehydrogenase A chain (332 aa).

Residues 29–57 (GAVGMACAISILMKDLADELALVDVVEDK) and Arg-99 contribute to the NAD(+) site. 3 residues coordinate substrate: Arg-106, Asn-138, and Arg-169. Residue Asn-138 coordinates NAD(+). His-193 functions as the Proton acceptor in the catalytic mechanism. Thr-248 is a substrate binding site.

It belongs to the LDH/MDH superfamily. LDH family. As to quaternary structure, homotetramer.

Its subcellular location is the cytoplasm. It catalyses the reaction (S)-lactate + NAD(+) = pyruvate + NADH + H(+). Its pathway is fermentation; pyruvate fermentation to lactate; (S)-lactate from pyruvate: step 1/1. Functionally, interconverts simultaneously and stereospecifically pyruvate and lactate with concomitant interconversion of NADH and NAD(+). The polypeptide is L-lactate dehydrogenase A chain (LDHA) (Columba livia (Rock dove)).